Here is a 91-residue protein sequence, read N- to C-terminus: Acylphosphatase (91 aa).

Residues 3-89 (AKHLILSGRV…PAEPGFVKRA (87 aa)) form the Acylphosphatase-like domain. Catalysis depends on residues Arg18 and Asn36.

The protein belongs to the acylphosphatase family.

It catalyses the reaction an acyl phosphate + H2O = a carboxylate + phosphate + H(+). The polypeptide is Acylphosphatase (acyP) (Acidiphilium cryptum (strain JF-5)).